Here is a 586-residue protein sequence, read N- to C-terminus: RNA-directed RNA polymerase subunit beta (586 aa).

A RdRp catalytic domain is found at valine 259–glycine 391. Positions 274, 359, and 360 each coordinate Mg(2+).

As to quaternary structure, homodimer; the replicase complex can dimerize. Part of the viral RNA-dependent RNA polymerase complex, the other subunits are the host ribosomal protein S1, EF-Tu and EF-Ts. S1 is needed for the initiation of genomic RNA (+)-strand replication. It depends on Mg(2+) as a cofactor.

It catalyses the reaction RNA(n) + a ribonucleoside 5'-triphosphate = RNA(n+1) + diphosphate. Its function is as follows. This is the catalytic subunit of the viral RNA-dependent RNA polymerase complex. This complex is involved in viral RNA replication that produces (+)-stranded genomes via a complementary, (-)-stranded intermediate. Binds RNA cooperatively with the host ribosomal protein S1. This Escherichia coli protein is RNA-directed RNA polymerase subunit beta.